Reading from the N-terminus, the 177-residue chain is MSVADTIARPYAQAIFEIAIENNTIEKWKNILIFIKTIASHKKFKNFLSGSISPKYLSLIFITIGTNIIDENAKNLIKLLSENQRFNILNNIFERFVKLEACYKNIIIVQLKSAFSLKENLINKIRKVLERFFLKKTKIIYKVDPNILNGMIVKVNNTIFDLSAQNHLKQLSDSLNF.

This sequence belongs to the ATPase delta chain family. In terms of assembly, F-type ATPases have 2 components, F(1) - the catalytic core - and F(0) - the membrane proton channel. F(1) has five subunits: alpha(3), beta(3), gamma(1), delta(1), epsilon(1). F(0) has three main subunits: a(1), b(2) and c(10-14). The alpha and beta chains form an alternating ring which encloses part of the gamma chain. F(1) is attached to F(0) by a central stalk formed by the gamma and epsilon chains, while a peripheral stalk is formed by the delta and b chains.

The protein localises to the cell membrane. Functionally, f(1)F(0) ATP synthase produces ATP from ADP in the presence of a proton or sodium gradient. F-type ATPases consist of two structural domains, F(1) containing the extramembraneous catalytic core and F(0) containing the membrane proton channel, linked together by a central stalk and a peripheral stalk. During catalysis, ATP synthesis in the catalytic domain of F(1) is coupled via a rotary mechanism of the central stalk subunits to proton translocation. This protein is part of the stalk that links CF(0) to CF(1). It either transmits conformational changes from CF(0) to CF(1) or is implicated in proton conduction. The chain is ATP synthase subunit delta from Buchnera aphidicola subsp. Acyrthosiphon pisum (strain APS) (Acyrthosiphon pisum symbiotic bacterium).